The chain runs to 820 residues: Cation/H(+) antiporter 17 (820 aa).

12 helical membrane passes run 30–50 (LPLL…LAFL), 58–75 (RVIA…SALG), 90–110 (LTVL…LVGL), 124–144 (ALSI…GTSF), 159–179 (FLVF…ARIL), 192–212 (IALS…ALAV), 222–242 (LTSL…IFVV), 276–296 (FVTD…GVIF), 313–333 (LVSG…TNVA), 342–362 (GLLV…TVLV), 374–394 (LALG…LNIG), and 404–424 (IFAI…PLVL). Phosphoserine is present on residues serine 817 and serine 819.

This sequence belongs to the monovalent cation:proton antiporter 2 (CPA2) transporter (TC 2.A.37) family. CHX (TC 2.A.37.4) subfamily. Predominantly expressed in epidermal and cortical cells of mature roots but also barely detected in leaves.

The protein resides in the membrane. In terms of biological role, operates as a K(+)/H(+) antiporter that controls K(+) acquisition and homeostasis. In Arabidopsis thaliana (Mouse-ear cress), this protein is Cation/H(+) antiporter 17 (CHX17).